We begin with the raw amino-acid sequence, 266 residues long: Short-chain dehydrogenase/reductase atnB (266 aa).

Residues isoleucine 13, aspartate 57, and asparagine 85 each coordinate NADP(+). Residues serine 147 and tyrosine 166 each act as proton donor in the active site. 4 residues coordinate NADP(+): tyrosine 166, lysine 170, valine 199, and threonine 201. Lysine 170 (lowers pKa of active site Tyr) is an active-site residue.

This sequence belongs to the short-chain dehydrogenases/reductases (SDR) family.

It participates in secondary metabolite biosynthesis; terpenoid biosynthesis. In terms of biological role, short-chain dehydrogenase/reductase; part of the gene cluster that mediates the biosynthesis of the meroterpenoids arthripenoids. The pathway begins with the HR-PKS atnH that catalyzes two chain-extension steps to form a reduced triketide, which then primes the SAT domain in the NR-PKS atnG to initiate three more cycles of extension to give a linear hexaketide corresponding to the polyketide part of arthripenoids. The FAD-dependent monooxygenase atnJ then performs an oxidative decarboxylation at C11 of the atnH/atnG product, via an electrophilic aromatic hydroxylation with concomitant ipso-decarboxylation. The membrane-bound polyprenyl transferase atnF then introduces a farnesyl group before the FAD-dependent monooxygenase atnK functions as the first epoxidase on terminal C12'-C13' olefin, followed by a second epoxidation on C7'-C8' catalyzed by atnA. The terpene cyclase/mutase atnI then initiates the sequential tricyclic ring formation through protonation of the terminal epoxide and catalyzes the regioselective and stereoselective 6/6/6-tricyclic ring formation. The cytochrome P450 monooxygenase atnM is responsible for hydroxylating both C1' and C10'. The next steps may involve ketoreduction and acetyl transfer by the ketoreductase atnB and the acetyltransferase atnC, and lead to the production of arthripenoid B, the final biosynthetic product of the atn cluster. The hydroquinone moiety in arthripenoid B is prone to undergo spontaneous oxidation to afford a benzoquinone compound, a key intermediate for generating structure diversity. For instance, addition of a cysteine followed by ring contraction gives arthripenoid A, tautomerization gives the main product arthripenoid C, addition of a molecular of water or amine affords arthripenoid D or E, respectively, and loss of one water forms arthripenoid F. This chain is Short-chain dehydrogenase/reductase atnB, found in Arthrinium sp.